The chain runs to 442 residues: Histidinol dehydrogenase (442 aa).

The segment at 1–20 (MLNVTDLRGQTPSKSDIRRA) is disordered. 3 residues coordinate NAD(+): Tyr-129, Gln-193, and Asn-218. 3 residues coordinate substrate: Thr-241, Gln-263, and His-266. Gln-263 and His-266 together coordinate Zn(2+). Catalysis depends on proton acceptor residues Glu-332 and His-333. Positions 333, 366, 420, and 425 each coordinate substrate. Residue Asp-366 coordinates Zn(2+). Position 425 (His-425) interacts with Zn(2+).

This sequence belongs to the histidinol dehydrogenase family. Zn(2+) is required as a cofactor.

The catalysed reaction is L-histidinol + 2 NAD(+) + H2O = L-histidine + 2 NADH + 3 H(+). The protein operates within amino-acid biosynthesis; L-histidine biosynthesis; L-histidine from 5-phospho-alpha-D-ribose 1-diphosphate: step 9/9. Functionally, catalyzes the sequential NAD-dependent oxidations of L-histidinol to L-histidinaldehyde and then to L-histidine. The chain is Histidinol dehydrogenase from Corynebacterium glutamicum (strain ATCC 13032 / DSM 20300 / JCM 1318 / BCRC 11384 / CCUG 27702 / LMG 3730 / NBRC 12168 / NCIMB 10025 / NRRL B-2784 / 534).